The sequence spans 622 residues: Low affinity potassium transport system protein Kup (622 aa).

The next 12 membrane-spanning stretches (helical) occupy residues 9–29 (LSAI…TSPL), 49–69 (VFGF…IKYL), 103–123 (VIMG…TPAI), 137–157 (PELD…LFMI), 165–185 (VGKL…GLGL), 213–233 (VSFI…ALYA), 247–267 (WFSV…ALLL), 276–296 (PFFL…AALA), 337–357 (IYIP…IVSF), 363–383 (LAAA…ILST), 396–416 (FVAL…SANL), and 419–439 (LLSG…IMTT).

Belongs to the HAK/KUP transporter (TC 2.A.72) family.

The protein localises to the cell inner membrane. The enzyme catalyses K(+)(in) + H(+)(in) = K(+)(out) + H(+)(out). Functionally, responsible for the low-affinity transport of potassium into the cell. Likely operates as a K(+):H(+) symporter. The sequence is that of Low affinity potassium transport system protein Kup from Citrobacter koseri (strain ATCC BAA-895 / CDC 4225-83 / SGSC4696).